The chain runs to 317 residues: NADPH-dependent D-xylose reductase (317 aa).

Residue Tyr-47 is the Proton donor of the active site. Residue His-109 participates in substrate binding. Residues 164–165, 213–222, and 269–279 each bind NADP(+); these read SN, SSFGPQSFVE, and KSNNPDRLLSN.

It belongs to the aldo/keto reductase family.

It catalyses the reaction xylitol + NAD(+) = D-xylose + NADH + H(+). The enzyme catalyses xylitol + NADP(+) = D-xylose + NADPH + H(+). It functions in the pathway carbohydrate metabolism; D-xylose degradation. Functionally, reduces D-xylose into xylitol. Preferentially utilizes NADPH as a cosubstrate. The chain is NADPH-dependent D-xylose reductase (XYL1) from Meyerozyma guilliermondii (strain ATCC 6260 / CBS 566 / DSM 6381 / JCM 1539 / NBRC 10279 / NRRL Y-324) (Yeast).